A 718-amino-acid chain; its full sequence is Ribosome-releasing factor 2, mitochondrial (718 aa).

Residues 1–29 (MLKCAWQNGPRQSNRWLWQLSNQIWKRSY) constitute a mitochondrion transit peptide. Positions 31–310 (SKIRNIGILA…AVNSYLPAPE (280 aa)) constitute a tr-type G domain. GTP contacts are provided by residues 40–47 (AHIDAGKT), 104–108 (DTPGH), and 158–161 (NKMD).

It belongs to the TRAFAC class translation factor GTPase superfamily. Classic translation factor GTPase family. EF-G/EF-2 subfamily.

It is found in the mitochondrion. In terms of biological role, mitochondrial GTPase that mediates the disassembly of ribosomes from messenger RNA at the termination of mitochondrial protein biosynthesis. Not involved in the GTP-dependent ribosomal translocation step during translation elongation. The protein is Ribosome-releasing factor 2, mitochondrial of Drosophila erecta (Fruit fly).